Reading from the N-terminus, the 81-residue chain is Putative defensin-like protein 188 (81 aa).

Positions 1 to 19 are cleaved as a signal peptide; sequence MKNSSLLFILIVVFVISSS. Intrachain disulfides connect C31–C81, C37–C57, C43–C75, and C47–C77.

This sequence belongs to the DEFL family.

It is found in the secreted. This Arabidopsis thaliana (Mouse-ear cress) protein is Putative defensin-like protein 188 (LCR41).